A 2345-amino-acid chain; its full sequence is MDEPSPLAKTLELNQHSRFIIGSVSEDNSEDEISNLVKLDLEEKEGSLSPASVSSDTLSDLGISALQDGLAFHMRSSMSGLHLVKQGRDRKKIDSQRDFTVASPAEFVTRFGGNKVIEKVLIANNGIAAVKCMRSIRRWSYEMFRNERAIRFVVMVTPEDLKANAEYIKMADHYVPVPGGANNNNYANVELILDIAKRIPVQAVWAGWGHASENPKLPELLLKNGIAFMGPPSQAMWALGDKIASSIVAQTAGIPTLPWSGSGLRVDWQENDFSKRILNVPQDLYEKGYVKDVDDGLKAAEEVGYPVMIKASEGGGGKGIRKVNNADDFPNLFRQVQAEVPGSPIFVMRLAKQSRHLEVQILADQYGNAISLFGRDCSVQRRHQKIIEEAPAAIATPAVFEHMEQCAVKLAKMVGYVSAGTVEYLYSQDGSFYFLELNPRLQVEHPCTEMVADVNLPAAQLQIAMGIPLFRIKDIRMMYGVSPWGDAPIDFENSAHVPCPRGHVIAARITSENPDEGFKPSSGTVQELNFRSNKNVWGYFSVAAAGGLHEFADSQFGHCFSWGENREEAISNMVVALKELSIRGDFRTTVEYLIKLLETESFQLNRIDTGWLDRLIAEKVQAERPDTMLGVVCGALHVADVNLRNSISNFLHSLERGQVLPAHTLLNTVDVELIYEGIKYVLKVTRQSPNSYVVIMNGSCVEVDVHRLSDGGLLLSYDGSSYTTYMKEEVDRYRITIGNKTCVFEKENDPSVMRSPSAGKLIQYIVEDGGHVFAGQCYAEIEVMKMVMTLTAVESGCIHYVKRPGAALDPGCVIAKMQLDNPSKVQQAELHTGSLPQIQSTALRGEKLHRVFHYVLDNLVNVMNGYCLPDPFFSSKVKDWVERLMKTLRDPSLPLLELQDIMTSVSGRIPLNVEKSIKKEMAQYASNITSVLCQFPSQQIANILDSHAATLNRKSEREVFFMNTQSIVQLVQRYRSGIRGHMKAVVMDLLRQYLRVETQFQNGHYDKCVFALREENKSDMNTVLNYIFSHAQVTKKNLLVTMLIDQLCGRDPTLTDELLNILTELTQLSKTTNAKVALRARQVLIASHLPSYDVRHNQVESIFLSAIDMYGHQFCIENLQKLILSETSIFDVLPNFFYHSNQVVRMAALEVYVRRAYIAYELNSVQHRQLKDNTCVVEFQFMLPTSHPNRGNIPTLNRMSFASNLNHYGMTHVASVSDVLLDNAFTPPCQRMGGMVSFRTFEDFVRIFDEVMGCFCDSPPQSPTFPESGHTSLYDEDKVPRDEPIHILNVAIKTDGDIEDDRLAAMFREFTQQNKATLVEHGIRRLTFLVAQKDFRKQVNCEVDQRFHREFPKFFTFRARDKFEEDRIYRHLEPALAFQLELNRMRNFDLTAIPCANHKMHLYLGAAKVEVGTEVTDYRFFVRAIIRHSDLVTKEASFEYLQNEGERLLLEAMDELEVAFNNTNVRTDCNHIFLNFVPTVIMDPSKIEESVRSMVMRYGSRLWKLRVLQAELKINIRLTTTGKAIPIRLFLTNESGYYLDISLYKEVTDSRTAQIMFQAYGDKQGPLHGMLINTPYVTKDLLQSKRFQAQSLGTTYIYDIPEMFRQSLIKLWESMSTQAFLPSPPLPSDILTYTELVLDDQGQLVHMNRLPGGNEIGMVAWKMSLKSPEYPDGRDVIVIGNDITYRIGSFGPQEDLLFLRASELARAEGIPRIYVAANSGARIGLAEEIRHMFHVAWVDSEDPYKGYKYLYLTPQDYKRVSALNSVHCEHVEDEGESRYKITDIIGKEEGLGAENLRGSGMIAGESSLAYDEIITISLVTCRAIGIGAYLVRLGQRTIQVENSHLILTGAGALNKVLGREVYTSNNQLGGIQIMHNNGVTHCTVCDDFEGVFTVLHWLSYMPKNVHSSVPLLNSKDPIDRIIEFVPTKAPYDPRWMLAGRPHPTQKGQWLSGFFDYGSFSEIMQPWAQTVVVGRARLGGIPVGVVAVETRTVELSVPADPANLDSEAKIIQQAGQVWFPDSAFKTYQAIKDFNREGLPLMVFANWRGFSGGMKDMYDQVLKFGAYIVDGLRECSQPVMVYIPPQAELRGGSWVVIDPTINPRHMEMYADRESRGSVLEPEGTVEIKFRKKDLVKTMRRVDPVYIRLAERLGTPELSPTERKELESKLKEREEFLIPIYHQVAVQFADLHDTPGRMQEKGVINDILDWKTSRTFFYWRLRRLLLEDLVKKKIHSANPELTDGQIQAMLRRWFVEVEGTVKAYVWDNNKDLVEWLEKQLTEEDGVRSVIEENIKYISRDYVLKQIRSLVQANPEVAMDSIVHMTQHISPTQRAEVVRILSTMDSPST.

The residue at position 1 (Met1) is an N-acetylmethionine. Phosphoserine is present on residues Ser5, Ser23, Ser25, Ser29, Ser34, Ser47, Ser49, and Ser52. Thr57 carries the phosphothreonine modification. Ser77 is modified (phosphoserine). Ser79 bears the Phosphoserine; by AMPK mark. Positions 116–617 (VIEKVLIANN…DTGWLDRLIA (502 aa)) constitute a Biotin carboxylation domain. The 192-residue stretch at 274-465 (SKRILNVPQD…LPAAQLQIAM (192 aa)) folds into the ATP-grasp domain. An ATP-binding site is contributed by 314–319 (GGGGKG). Residues Glu423, Glu436, and Asn438 each coordinate Mg(2+). Positions 423, 436, and 438 each coordinate Mn(2+). Arg440 is an active-site residue. A Phosphothreonine modification is found at Thr609. The Biotinyl-binding domain maps to 744-818 (FEKENDPSVM…DPGCVIAKMQ (75 aa)). The residue at position 785 (Lys785) is an N6-biotinyllysine. The residue at position 834 (Ser834) is a Phosphoserine. Phosphoserine; by AMPK; in vitro is present on residues Ser1200 and Ser1215. Phosphoserine is present on Ser1217. The residue at position 1226 (Thr1226) is a Phosphothreonine. Ser1258, Ser1262, and Ser1272 each carry phosphoserine. Lys1333 carries the post-translational modification N6-acetyllysine. The region spanning 1575-1913 (PYVTKDLLQS…NVHSSVPLLN (339 aa)) is the CoA carboxyltransferase N-terminal domain. The segment at 1575–2233 (PYVTKDLLQS…EDLVKKKIHS (659 aa)) is carboxyltransferase. Arg1822, Lys2126, and Arg2128 together coordinate CoA. The region spanning 1917-2233 (PIDRIIEFVP…EDLVKKKIHS (317 aa)) is the CoA carboxyltransferase C-terminal domain. The residue at position 2152 (Thr2152) is a Phosphothreonine.

Monomer, homodimer, and homotetramer. Can form filamentous polymers. Interacts in its inactive phosphorylated form with the BRCT domains of BRCA1 which prevents ACACA dephosphorylation and inhibits lipid synthesis. Interacts with MID1IP1; interaction with MID1IP1 promotes oligomerization and increases its activity. The cofactor is Mg(2+). Mn(2+) serves as cofactor. Requires biotin as cofactor. In terms of processing, the N-terminus is blocked. Post-translationally, phosphorylation on Ser-1262 is required for interaction with BRCA1. Phosphorylation at Ser-79 by AMPK inactivates enzyme activity. Phosphorylated in vitro at Ser-1200 and Ser-1215 by AMPK; the relevance of phosphorylation of these sites in vivo is however unclear. In terms of processing, the biotin cofactor is covalently attached to the central biotinyl-binding domain and is required for the catalytic activity.

It localises to the cytoplasm. Its subcellular location is the cytosol. The catalysed reaction is hydrogencarbonate + acetyl-CoA + ATP = malonyl-CoA + ADP + phosphate + H(+). It functions in the pathway lipid metabolism; malonyl-CoA biosynthesis; malonyl-CoA from acetyl-CoA: step 1/1. Its activity is regulated as follows. Inhibited by phosphorylation. Citrate promotes oligomerization of the protein into filaments that correspond to the most active form of the carboxylase. Functionally, cytosolic enzyme that catalyzes the carboxylation of acetyl-CoA to malonyl-CoA, the first and rate-limiting step of de novo fatty acid biosynthesis. This is a 2 steps reaction starting with the ATP-dependent carboxylation of the biotin carried by the biotin carboxyl carrier (BCC) domain followed by the transfer of the carboxyl group from carboxylated biotin to acetyl-CoA. The chain is Acetyl-CoA carboxylase 1 from Rattus norvegicus (Rat).